Here is a 460-residue protein sequence, read N- to C-terminus: Argininosuccinate lyase (460 aa).

This sequence belongs to the lyase 1 family. Argininosuccinate lyase subfamily.

The protein localises to the cytoplasm. The enzyme catalyses 2-(N(omega)-L-arginino)succinate = fumarate + L-arginine. The protein operates within amino-acid biosynthesis; L-arginine biosynthesis; L-arginine from L-ornithine and carbamoyl phosphate: step 3/3. This is Argininosuccinate lyase from Sulfurimonas denitrificans (strain ATCC 33889 / DSM 1251) (Thiomicrospira denitrificans (strain ATCC 33889 / DSM 1251)).